Reading from the N-terminus, the 426-residue chain is Serine--tRNA ligase (426 aa).

233-235 (TAE) contacts L-serine. 264–266 (RSE) is an ATP binding site. Glutamate 287 is a binding site for L-serine. 351-354 (EISS) serves as a coordination point for ATP. Serine 387 is an L-serine binding site.

The protein belongs to the class-II aminoacyl-tRNA synthetase family. Type-1 seryl-tRNA synthetase subfamily. As to quaternary structure, homodimer. The tRNA molecule binds across the dimer.

The protein localises to the cytoplasm. The enzyme catalyses tRNA(Ser) + L-serine + ATP = L-seryl-tRNA(Ser) + AMP + diphosphate + H(+). It catalyses the reaction tRNA(Sec) + L-serine + ATP = L-seryl-tRNA(Sec) + AMP + diphosphate + H(+). It participates in aminoacyl-tRNA biosynthesis; selenocysteinyl-tRNA(Sec) biosynthesis; L-seryl-tRNA(Sec) from L-serine and tRNA(Sec): step 1/1. Catalyzes the attachment of serine to tRNA(Ser). Is also able to aminoacylate tRNA(Sec) with serine, to form the misacylated tRNA L-seryl-tRNA(Sec), which will be further converted into selenocysteinyl-tRNA(Sec). This Clostridium botulinum (strain Langeland / NCTC 10281 / Type F) protein is Serine--tRNA ligase.